We begin with the raw amino-acid sequence, 50 residues long: uncharacterized protein (50 aa).

A helical membrane pass occupies residues 10-29 (LFFYYPFFIIFLYIYLVFFI).

Its subcellular location is the plastid. It is found in the chloroplast membrane. This is an uncharacterized protein from Marchantia polymorpha (Common liverwort).